Reading from the N-terminus, the 444-residue chain is Chitinase-like protein Idgf5 (444 aa).

The N-terminal stretch at 1-26 (MMWIQKNPFLGLLLCSFLAFFQSTYA) is a signal peptide. The GH18 domain occupies 29–444 (GKLVCFYDAQ…PILRSIKFKL (416 aa)). A disulfide bond links C33 and C60. N-linked (GlcNAc...) asparagine glycosylation is found at N289 and N311. The cysteines at positions 349 and 429 are disulfide-linked.

It belongs to the glycosyl hydrolase 18 family. IDGF subfamily. Post-translationally, glycosylated.

It localises to the secreted. In terms of biological role, probably required to stimulate the proliferation, polarization and motility of imaginal disk cells. May act by stabilizing the binding of insulin-like peptides to its receptor through a simultaneous interaction with both molecules to form a multiprotein signaling complex. This is Chitinase-like protein Idgf5 (Idgf5) from Drosophila melanogaster (Fruit fly).